Consider the following 154-residue polypeptide: uncharacterized protein (154 aa).

A divalent metal cation-binding residues include His47, His127, and His131. A Phosphotyrosine modification is found at Tyr150.

This sequence belongs to the DinB family. As to quaternary structure, homodimer.

This is an uncharacterized protein from Bacillus subtilis (strain 168).